We begin with the raw amino-acid sequence, 135 residues long: RuBisCO chaperone RbcX (135 aa).

The segment at 103 to 135 (QHLERMTQVSLSHPSPESEQQQFSDPDWDNLAS) is disordered. The segment covering 109-126 (TQVSLSHPSPESEQQQFS) has biased composition (polar residues).

Belongs to the RbcX family. In terms of assembly, homodimer. Interacts with the exposed C-terminal peptide of RbcL ('Glu-459-Asp-468'); binds 1 RbcL peptide per homodimer. Contacts a second RbcL monomer via its peripheral polar surface. A slightly longer RbcL peptide binds to RbcX2 with a higher affinity.

Its subcellular location is the carboxysome. It is found in the cytoplasm. In terms of biological role, an RbcL-specific chaperone. The central cleft of the RbcX homodimer (RbcX2) binds the C-terminus of an RbcL monomer, stabilizing the C-terminus and probably preventing its reassociation with chaperonin GroEL-ES. At the same time the peripheral region of RbcX2 binds a second RbcL monomer, bridging the RbcL homodimers in the correct orientation. The RbcX2(2)-bound RbcL dimers then assemble into the RbcL8 core (RbcL8-(RbcX2)8). RbcS binding triggers the release of RbcX2. Its function is as follows. Required for optimal reconstitution of RuBisCO upon expression of rbcL-rbcS subunits in E.coli. The protein is RuBisCO chaperone RbcX of Anabaena sp. (strain CA / ATCC 33047).